Here is a 431-residue protein sequence, read N- to C-terminus: Glucose-1-phosphate adenylyltransferase (431 aa).

Lys-39 provides a ligand contact to beta-D-fructose 1,6-bisphosphate. The AMP site is built by Arg-40, His-46, and Arg-52. Tyr-114 serves as a coordination point for alpha-D-glucose 1-phosphate. AMP is bound at residue Arg-130. Alpha-D-glucose 1-phosphate-binding positions include Gly-179, 194-195 (EK), and Ser-212. AMP-binding residues include Glu-370 and Arg-386. Residues 419-423 (REMLR) and 429-431 (QER) each bind beta-D-fructose 1,6-bisphosphate.

The protein belongs to the bacterial/plant glucose-1-phosphate adenylyltransferase family. Homotetramer.

The enzyme catalyses alpha-D-glucose 1-phosphate + ATP + H(+) = ADP-alpha-D-glucose + diphosphate. It participates in glycan biosynthesis; glycogen biosynthesis. Allosterically activated by fructose-1,6-bisphosphate (F16BP) and inhibited by AMP. In terms of biological role, involved in the biosynthesis of ADP-glucose, a building block required for the elongation reactions to produce glycogen. Catalyzes the reaction between ATP and alpha-D-glucose 1-phosphate (G1P) to produce pyrophosphate and ADP-Glc. In Salmonella dublin (strain CT_02021853), this protein is Glucose-1-phosphate adenylyltransferase.